Here is a 467-residue protein sequence, read N- to C-terminus: Uronate isomerase (467 aa).

It belongs to the metallo-dependent hydrolases superfamily. Uronate isomerase family.

The enzyme catalyses D-glucuronate = D-fructuronate. It carries out the reaction aldehydo-D-galacturonate = keto-D-tagaturonate. The protein operates within carbohydrate metabolism; pentose and glucuronate interconversion. The protein is Uronate isomerase of Staphylococcus haemolyticus (strain JCSC1435).